A 132-amino-acid polypeptide reads, in one-letter code: D-ribose pyranase (132 aa).

His20 acts as the Proton donor in catalysis. Substrate-binding positions include Asp28, His99, and 121–123 (YSN).

Belongs to the RbsD / FucU family. RbsD subfamily. Homodecamer.

It is found in the cytoplasm. It catalyses the reaction beta-D-ribopyranose = beta-D-ribofuranose. It participates in carbohydrate metabolism; D-ribose degradation; D-ribose 5-phosphate from beta-D-ribopyranose: step 1/2. Its function is as follows. Catalyzes the interconversion of beta-pyran and beta-furan forms of D-ribose. The sequence is that of D-ribose pyranase from Pseudomonas putida (strain ATCC 47054 / DSM 6125 / CFBP 8728 / NCIMB 11950 / KT2440).